The chain runs to 372 residues: F-box/kelch-repeat protein At2g44630 (372 aa).

Residues methionine 1–glutamine 13 are compositionally biased toward polar residues. The interval methionine 1–proline 21 is disordered. The 47-residue stretch at proline 21 to arginine 67 folds into the F-box domain. Kelch repeat units lie at residues glutamate 136–glycine 181 and isoleucine 183–leucine 228.

This is F-box/kelch-repeat protein At2g44630 from Arabidopsis thaliana (Mouse-ear cress).